Consider the following 186-residue polypeptide: Peptidyl-tRNA hydrolase (186 aa).

Residue Tyr14 coordinates tRNA. His19 acts as the Proton acceptor in catalysis. Tyr64, Asn66, and Asn112 together coordinate tRNA.

Belongs to the PTH family. As to quaternary structure, monomer.

It localises to the cytoplasm. It carries out the reaction an N-acyl-L-alpha-aminoacyl-tRNA + H2O = an N-acyl-L-amino acid + a tRNA + H(+). Hydrolyzes ribosome-free peptidyl-tRNAs (with 1 or more amino acids incorporated), which drop off the ribosome during protein synthesis, or as a result of ribosome stalling. Functionally, catalyzes the release of premature peptidyl moieties from peptidyl-tRNA molecules trapped in stalled 50S ribosomal subunits, and thus maintains levels of free tRNAs and 50S ribosomes. The polypeptide is Peptidyl-tRNA hydrolase (Bacillus anthracis).